The primary structure comprises 337 residues: Holliday junction branch migration complex subunit RuvB (337 aa).

The interval 4–185 is large ATPase domain (RuvB-L); sequence ADRLISNSFE…FGITQRLEYY (182 aa). ATP-binding positions include Ile24, Arg25, Gly66, Lys69, Thr70, Thr71, 132 to 134, Arg175, Tyr185, and Arg222; that span reads EDY. Thr70 contacts Mg(2+). The small ATPAse domain (RuvB-S) stretch occupies residues 186–256; sequence KVDDLKDIVQ…TAKKALDMLD (71 aa). The segment at 259 to 337 is head domain (RuvB-H); it reads SSGFDYMDRK…HFGLDIPEAR (79 aa). DNA contacts are provided by Arg314 and Arg319.

Belongs to the RuvB family. In terms of assembly, homohexamer. Forms an RuvA(8)-RuvB(12)-Holliday junction (HJ) complex. HJ DNA is sandwiched between 2 RuvA tetramers; dsDNA enters through RuvA and exits via RuvB. An RuvB hexamer assembles on each DNA strand where it exits the tetramer. Each RuvB hexamer is contacted by two RuvA subunits (via domain III) on 2 adjacent RuvB subunits; this complex drives branch migration. In the full resolvosome a probable DNA-RuvA(4)-RuvB(12)-RuvC(2) complex forms which resolves the HJ.

The protein resides in the cytoplasm. It carries out the reaction ATP + H2O = ADP + phosphate + H(+). The RuvA-RuvB-RuvC complex processes Holliday junction (HJ) DNA during genetic recombination and DNA repair, while the RuvA-RuvB complex plays an important role in the rescue of blocked DNA replication forks via replication fork reversal (RFR). RuvA specifically binds to HJ cruciform DNA, conferring on it an open structure. The RuvB hexamer acts as an ATP-dependent pump, pulling dsDNA into and through the RuvAB complex. RuvB forms 2 homohexamers on either side of HJ DNA bound by 1 or 2 RuvA tetramers; 4 subunits per hexamer contact DNA at a time. Coordinated motions by a converter formed by DNA-disengaged RuvB subunits stimulates ATP hydrolysis and nucleotide exchange. Immobilization of the converter enables RuvB to convert the ATP-contained energy into a lever motion, pulling 2 nucleotides of DNA out of the RuvA tetramer per ATP hydrolyzed, thus driving DNA branch migration. The RuvB motors rotate together with the DNA substrate, which together with the progressing nucleotide cycle form the mechanistic basis for DNA recombination by continuous HJ branch migration. Branch migration allows RuvC to scan DNA until it finds its consensus sequence, where it cleaves and resolves cruciform DNA. The sequence is that of Holliday junction branch migration complex subunit RuvB from Photobacterium profundum (strain SS9).